Here is a 60-residue protein sequence, read N- to C-terminus: UPF0434 protein YcaR (60 aa).

The protein belongs to the UPF0434 family.

The sequence is that of UPF0434 protein YcaR from Escherichia coli O139:H28 (strain E24377A / ETEC).